The chain runs to 245 residues: 1-(5-phosphoribosyl)-5-[(5-phosphoribosylamino)methylideneamino] imidazole-4-carboxamide isomerase (245 aa).

The active-site Proton acceptor is the Asp-7. Catalysis depends on Asp-129, which acts as the Proton donor.

The protein belongs to the HisA/HisF family.

The protein localises to the cytoplasm. It carries out the reaction 1-(5-phospho-beta-D-ribosyl)-5-[(5-phospho-beta-D-ribosylamino)methylideneamino]imidazole-4-carboxamide = 5-[(5-phospho-1-deoxy-D-ribulos-1-ylimino)methylamino]-1-(5-phospho-beta-D-ribosyl)imidazole-4-carboxamide. It functions in the pathway amino-acid biosynthesis; L-histidine biosynthesis; L-histidine from 5-phospho-alpha-D-ribose 1-diphosphate: step 4/9. The sequence is that of 1-(5-phosphoribosyl)-5-[(5-phosphoribosylamino)methylideneamino] imidazole-4-carboxamide isomerase from Escherichia coli O17:K52:H18 (strain UMN026 / ExPEC).